The following is a 348-amino-acid chain: Phospho-2-dehydro-3-deoxyheptonate aldolase, Trp-sensitive (348 aa).

This sequence belongs to the class-I DAHP synthase family.

It catalyses the reaction D-erythrose 4-phosphate + phosphoenolpyruvate + H2O = 7-phospho-2-dehydro-3-deoxy-D-arabino-heptonate + phosphate. Its pathway is metabolic intermediate biosynthesis; chorismate biosynthesis; chorismate from D-erythrose 4-phosphate and phosphoenolpyruvate: step 1/7. Its function is as follows. Stereospecific condensation of phosphoenolpyruvate (PEP) and D-erythrose-4-phosphate (E4P) giving rise to 3-deoxy-D-arabino-heptulosonate-7-phosphate (DAHP). This chain is Phospho-2-dehydro-3-deoxyheptonate aldolase, Trp-sensitive (aroH), found in Enterobacter agglomerans (Erwinia herbicola).